The chain runs to 566 residues: Tissue-type plasminogen activator (566 aa).

The first 21 residues, 1–21, serve as a signal peptide directing secretion; it reads MMSAMKTEFLCVLLLCGAVFT. Positions 22–33 are excised as a propeptide; sequence SPSQETYRRLRR. A propeptide spans 34 to 36 (removed by plasmin); sequence GAR. In terms of domain architecture, Fibronectin type-I spans 40–82; sequence VTCRDGKTQMTYRQHDSWLRPLLRGNQVEHCWCDGGRAQCHSV. Disulfide bonds link C42-C72, C70-C79, C87-C98, C92-C109, C111-C120, C128-C209, C149-C191, C180-C204, C219-C300, C240-C282, C271-C295, C303-C434, C346-C362, C354-C423, C448-C523, C480-C496, and C513-C541. The segment at 43–53 is important for binding to annexin A2; it reads RDGKTQMTYRQ. The EGF-like domain maps to 83-121; that stretch reads PVRSCSEPWCFNGGTCRQALYSSDFVCQCPEGFMGKLCE. 2 consecutive Kringle domains span residues 128-209 and 219-300; these read CYKD…TPAC and CYTG…VPQC. N153 carries N-linked (GlcNAc...) asparagine glycosylation. The Peptidase S1 domain occupies 315-565; it reads IKGGLFADIT…YLDWIRDNTR (251 aa). Catalysis depends on charge relay system residues H361 and D410. The N-linked (GlcNAc...) asparagine glycan is linked to N487. S517 (charge relay system) is an active-site residue.

The protein belongs to the peptidase S1 family. As to quaternary structure, heterodimer of chain A and chain B held by a disulfide bond. Binds to fibrin with high affinity. This interaction leads to an increase in the catalytic efficiency of the enzyme due to an increase in affinity for plasminogen. Similarly, binding to heparin increases the activation of plasminogen. Binds to annexin A2, cytokeratin-8, fibronectin and laminin. Binds to mannose receptor and the low-density lipoprotein receptor-related protein (LRP1); these proteins are involved in TPA clearance. Binds LRP1B; binding is followed by internalization and degradation. Forms heterodimer with SERPINA5. Interacts with SERPINE1. In complex with SERPINE1, interacts with SORL1. Post-translationally, the single chain, almost fully active enzyme, can be further processed into a two-chain fully active form by a cleavage after Arg-314 catalyzed by plasmin, tissue kallikrein or factor Xa.

Its subcellular location is the secreted. The protein localises to the extracellular space. The enzyme catalyses Specific cleavage of Arg-|-Val bond in plasminogen to form plasmin.. Inhibited by SERPINA5. Inhibited by SERPINE1. Converts the abundant, but inactive, zymogen plasminogen to plasmin by hydrolyzing a single Arg-Val bond in plasminogen. By controlling plasmin-mediated proteolysis, it plays an important role in tissue remodeling and degradation, in cell migration and many other physiopathological events. During oocyte activation, plays a role in cortical granule reaction in the zona reaction, which contributes to the block to polyspermy. This Bos taurus (Bovine) protein is Tissue-type plasminogen activator (PLAT).